The sequence spans 922 residues: Band 3 anion transport protein (922 aa).

Disordered stretches follow at residues 1 to 36 and 355 to 389; these read MEGPGQDTEDALRRSLDPEGYEDTKGSRTSLGTMSN and QHPDTVRSPGGPTAPKDTGDKGQAPQDDDPLLRTR. Residues 1 to 416 are Cytoplasmic-facing; sequence MEGPGQDTED…LSDIRDALNP (416 aa). Residues 10–26 show a composition bias toward basic and acidic residues; that stretch reads DALRRSLDPEGYEDTKG. Residues 27–36 show a composition bias toward polar residues; the sequence is SRTSLGTMSN. The chain crosses the membrane as a helical span at residues 417-440; it reads QCLAAVIFIYFAALSPAITFGGLL. Residues 441–448 are Extracellular-facing; sequence GEKTRGMM. A helical transmembrane segment spans residues 449–469; it reads GVSELLLSTSVQCLLFSLLSA. The Cytoplasmic portion of the chain corresponds to 470 to 472; sequence QPL. A discontinuously helical transmembrane segment spans residues 473–489; it reads LVVGFSGPLLVFEEAFF. Residues 490-498 are Extracellular-facing; that stretch reads RFCEDHGLE. Residues 499-519 form a helical membrane-spanning segment; it reads YIVGRVWIGFWLILLVLLVVA. Topologically, residues 520 to 531 are cytoplasmic; it reads CEGTVLVRYLSR. The helical transmembrane segment at 532-554 threads the bilayer; it reads YTQEIFSFLISLIFIYETFAKLV. Residues 555–581 lie on the Extracellular side of the membrane; sequence TIFEAHPLQQSYDTDVSTEPSVPKPNT. The chain crosses the membrane as a helical span at residues 582-602; it reads ALLSLVLMAGTFFLALFLRQF. Topologically, residues 603 to 613 are cytoplasmic; that stretch reads KNSVFLPGKVR. The chain crosses the membrane as a helical span at residues 614 to 634; sequence RLIGDFGVPISIFVMALADFF. Over 635-674 the chain is Extracellular; it reads IKDTYTQKLKVPRGLEVTNGTARGWFIHPMGSATPFPIWM. Asn653 carries an N-linked (GlcNAc...) asparagine glycan. Residues 675-695 form a helical membrane-spanning segment; the sequence is MFASPVPALLVFILIFLETQI. Residues 696–711 are Cytoplasmic-facing; that stretch reads TTLIVSKPERKLVKGS. Residues 712–730 traverse the membrane as a helical segment; the sequence is GFHLDLLLIVAMGGLAALF. Residues 731–748 traverse the membrane as a discontinuously helical segment; that stretch reads GMPWLSATTVRTITHANA. Residues 749 to 771 lie on the Cytoplasmic side of the membrane; the sequence is LTVVGKSAVPGERAHIVEVKEQR. The next 2 membrane-spanning stretches (helical) occupy residues 772 to 792 and 793 to 811; these read LSGLLVAVLIGVSILMEPILK and YIPLAVLFGIFLYMGVTSL. At 812–849 the chain is on the cytoplasmic side; that stretch reads FGIQLFDRILLLLMPPKYHPKEPYVTRVKTWRITSSPL. Residues 850–880 constitute an intramembrane region (discontinuously helical); it reads TQILVVALLWGVKVSPASLRCPFVLVLTVPL. Topologically, residues 881 to 922 are cytoplasmic; sequence RRLLLPRIFSEIELKCLDTDDAVVTFEEAEGQDVYNEVQMPS.

Belongs to the anion exchanger (TC 2.A.31) family. As to quaternary structure, a dimer in solution, it spans the membrane asymmetrically and appears to be tetrameric. As to expression, erythrocytes.

It is found in the cell membrane. It localises to the basolateral cell membrane. The enzyme catalyses hydrogencarbonate(in) + chloride(out) = hydrogencarbonate(out) + chloride(in). Its function is as follows. Functions both as a transporter that mediates electroneutral anion exchange across the cell membrane and as a structural protein. Major integral membrane glycoprotein of the erythrocyte membrane; required for normal flexibility and stability of the erythrocyte membrane and for normal erythrocyte shape via the interactions of its cytoplasmic domain with cytoskeletal proteins, glycolytic enzymes, and hemoglobin. Functions as a transporter that mediates the 1:1 exchange of inorganic anions across the erythrocyte membrane. Mediates chloride-bicarbonate exchange in the kidney, and is required for normal acidification of the urine. The chain is Band 3 anion transport protein (SLC4A1) from Gallus gallus (Chicken).